Consider the following 344-residue polypeptide: Heat-inducible transcription repressor HrcA (344 aa).

Belongs to the HrcA family.

Its function is as follows. Negative regulator of class I heat shock genes (grpE-dnaK-dnaJ and groELS operons). Prevents heat-shock induction of these operons. The sequence is that of Heat-inducible transcription repressor HrcA from Streptococcus pneumoniae (strain P1031).